Here is an 84-residue protein sequence, read N- to C-terminus: Acyl carrier protein (84 aa).

The Carrier domain occupies 1 to 75; sequence MIFQKIQEFI…DILEYIQQHV (75 aa). Ser35 carries the post-translational modification O-(pantetheine 4'-phosphoryl)serine.

The protein belongs to the acyl carrier protein (ACP) family. Post-translationally, 4'-phosphopantetheine is transferred from CoA to a specific serine of apo-ACP by AcpS. This modification is essential for activity because fatty acids are bound in thioester linkage to the sulfhydryl of the prosthetic group.

It is found in the cytoplasm. Its pathway is lipid metabolism; fatty acid biosynthesis. Its function is as follows. Carrier of the growing fatty acid chain in fatty acid biosynthesis. In Phytoplasma mali (strain AT), this protein is Acyl carrier protein.